The chain runs to 238 residues: UPF0328 protein ECU07_0010 (238 aa).

2 disordered regions span residues 1–154 and 211–238; these read MAAP…NTQR and GRLH…LATL. Over residues 106-128 the composition is skewed to basic and acidic residues; that stretch reads HTEGCHTHEANPEPNTKHTETES. Over residues 129-152 the composition is skewed to polar residues; sequence PKPQTSTQHHTPITIPSSLLSQNT.

This sequence belongs to the UPF0328 family.

In Encephalitozoon cuniculi (strain GB-M1) (Microsporidian parasite), this protein is UPF0328 protein ECU07_0010.